The primary structure comprises 182 residues: Probable nicotinate-nucleotide adenylyltransferase (182 aa).

It belongs to the NadD family.

The enzyme catalyses nicotinate beta-D-ribonucleotide + ATP + H(+) = deamido-NAD(+) + diphosphate. It participates in cofactor biosynthesis; NAD(+) biosynthesis; deamido-NAD(+) from nicotinate D-ribonucleotide: step 1/1. Catalyzes the reversible adenylation of nicotinate mononucleotide (NaMN) to nicotinic acid adenine dinucleotide (NaAD). In Aliarcobacter butzleri (strain RM4018) (Arcobacter butzleri), this protein is Probable nicotinate-nucleotide adenylyltransferase.